Here is a 465-residue protein sequence, read N- to C-terminus: 23S rRNA (uracil(1939)-C(5))-methyltransferase RlmD (465 aa).

The disordered stretch occupies residues M1–A22. One can recognise a TRAM domain in the interval P16–D80. [4Fe-4S] cluster is bound by residues C93, C99, C102, and C181. S-adenosyl-L-methionine is bound by residues Q289, F318, N323, E339, N367, and D388. C421 (nucleophile) is an active-site residue.

Belongs to the class I-like SAM-binding methyltransferase superfamily. RNA M5U methyltransferase family. RlmD subfamily.

It catalyses the reaction uridine(1939) in 23S rRNA + S-adenosyl-L-methionine = 5-methyluridine(1939) in 23S rRNA + S-adenosyl-L-homocysteine + H(+). Functionally, catalyzes the formation of 5-methyl-uridine at position 1939 (m5U1939) in 23S rRNA. The sequence is that of 23S rRNA (uracil(1939)-C(5))-methyltransferase RlmD from Burkholderia cenocepacia (strain HI2424).